We begin with the raw amino-acid sequence, 119 residues long: Protein phosphatase EYA4 (119 aa).

The protein belongs to the HAD-like hydrolase superfamily. EYA family. Mg(2+) is required as a cofactor.

The protein localises to the cytoplasm. It is found in the nucleus. The catalysed reaction is O-phospho-L-tyrosyl-[protein] + H2O = L-tyrosyl-[protein] + phosphate. Functionally, tyrosine phosphatase that specifically dephosphorylates 'Tyr-142' of histone H2AX (H2AXY142ph). 'Tyr-142' phosphorylation of histone H2AX plays a central role in DNA repair and acts as a mark that distinguishes between apoptotic and repair responses to genotoxic stress. Promotes efficient DNA repair by dephosphorylating H2AX, promoting the recruitment of DNA repair complexes containing MDC1. Its function as histone phosphatase probably explains its role in transcription regulation during organogenesis. May be involved in development of the eye. The chain is Protein phosphatase EYA4 (EYA4) from Gallus gallus (Chicken).